The following is an 82-amino-acid chain: MAPQKVKALELLKWGVYFGMPIIATIHVLDPDRLDNLIMKHQFVVYPPEAQTQEEFKKKELEYFEKRTTKRLLEQQQQPTTN.

This is an uncharacterized protein from Dictyostelium discoideum (Social amoeba).